A 125-amino-acid polypeptide reads, in one-letter code: Acidic phospholipase A2 5 (125 aa).

Residue Ser-1 is a signal peptide. Residues 2-7 (NRPMPL) constitute a propeptide that is removed on maturation. Cystine bridges form between Cys-18–Cys-77, Cys-33–Cys-124, Cys-35–Cys-50, Cys-37–Cys-54, Cys-49–Cys-105, Cys-56–Cys-98, Cys-66–Cys-91, and Cys-84–Cys-96. Phe-28 contributes to the N-acetyl-beta-D-glucosamine binding site. Zn(2+) is bound at residue Asp-30. Residues Tyr-34 and Gly-36 each coordinate Ca(2+). The N-acetyl-beta-D-glucosamine site is built by His-53 and Lys-69. His-53 is a catalytic residue. Glu-76 is a binding site for Zn(2+). Residue Asp-99 is part of the active site. Residue Asn-117 coordinates Zn(2+).

As to quaternary structure, heterodimer formed between isoform 5 and isoform 6 in presence of zinc ion and monomer in absence of zinc ion. The cofactor is Ca(2+). In terms of tissue distribution, expressed by the venom gland.

Its subcellular location is the secreted. It catalyses the reaction a 1,2-diacyl-sn-glycero-3-phosphocholine + H2O = a 1-acyl-sn-glycero-3-phosphocholine + a fatty acid + H(+). PLA2 catalyzes the calcium-dependent hydrolysis of the 2-acyl groups in 3-sn-phosphoglycerides. The chain is Acidic phospholipase A2 5 from Naja sagittifera (Andaman cobra).